A 289-amino-acid polypeptide reads, in one-letter code: DDRGK domain-containing protein 1 (289 aa).

Topologically, residues 1-2 (MD) are lumenal. Residues 3–23 (PFILAAIISGIVIIILSIAFL) traverse the membrane as a helical segment. Over 24–289 (RVSQVKPQAA…LINLAPVTVP (266 aa)) the chain is Cytoplasmic. The disordered stretch occupies residues 65-168 (RHQAALEEEP…DERKKREQEE (104 aa)). Over residues 70-85 (LEEEPEIQEEADEGAP) the composition is skewed to acidic residues. Over residues 87-166 (IDQKIDFDDK…AEDERKKREQ (80 aa)) the composition is skewed to basic and acidic residues.

It belongs to the DDRGK1 family. Interacts with Atg9; the interaction is transient.

It is found in the endoplasmic reticulum membrane. Functionally, substrate adapter for ufmylation, the covalent attachment of the ubiquitin-like modifier UFM1 to substrate proteins. Required for ufmylation of Atg9; protects the nervous system during aging, possibly by stabilizing Atg9 and supporting its function. The chain is DDRGK domain-containing protein 1 from Bombyx mori (Silk moth).